A 486-amino-acid polypeptide reads, in one-letter code: Cobyric acid synthase (486 aa).

The region spanning 251–439 (RAKIVVPMLS…VHGLFERGEA (189 aa)) is the GATase cobBQ-type domain. Residue Cys-333 is the Nucleophile of the active site. His-431 is an active-site residue.

The protein belongs to the CobB/CobQ family. CobQ subfamily.

Its pathway is cofactor biosynthesis; adenosylcobalamin biosynthesis. Catalyzes amidations at positions B, D, E, and G on adenosylcobyrinic A,C-diamide. NH(2) groups are provided by glutamine, and one molecule of ATP is hydrogenolyzed for each amidation. This is Cobyric acid synthase from Caulobacter sp. (strain K31).